The following is an 87-amino-acid chain: Small ribosomal subunit protein bS20 (87 aa).

Belongs to the bacterial ribosomal protein bS20 family.

Its function is as follows. Binds directly to 16S ribosomal RNA. The protein is Small ribosomal subunit protein bS20 of Rhizorhabdus wittichii (strain DSM 6014 / CCUG 31198 / JCM 15750 / NBRC 105917 / EY 4224 / RW1) (Sphingomonas wittichii).